We begin with the raw amino-acid sequence, 175 residues long: Vesicle-associated membrane protein-associated protein SCS22 (175 aa).

Residues 1-125 form the MSP domain; the sequence is MRIVPEKLVF…DDIVFKKIKI (125 aa). Topologically, residues 1–154 are cytoplasmic; sequence MRIVPEKLVF…RAPSAGNGQS (154 aa). Positions 133 to 152 are disordered; it reads RKPSGNHDAESARAPSAGNG. Residues 155 to 175 traverse the membrane as a helical; Anchor for type IV membrane protein segment; that stretch reads LSSRALLIITVIALLVGWIYY.

This sequence belongs to the VAMP-associated protein (VAP) (TC 9.B.17) family.

It localises to the membrane. In terms of biological role, targets proteins containing a FFAT motif to membranes. Involved in regulation of phospholipid metabolism. The chain is Vesicle-associated membrane protein-associated protein SCS22 (SCS22) from Saccharomyces cerevisiae (strain ATCC 204508 / S288c) (Baker's yeast).